Reading from the N-terminus, the 454-residue chain is Putative serine/threonine-protein phosphatase C27B7.6 (454 aa).

Mn(2+) contacts are provided by Asp-65, His-67, Asp-93, and Asn-125. His-126 acts as the Proton donor in catalysis. Mn(2+)-binding residues include His-174 and His-252. Positions 414–454 (RKKLGMTTSTTPPPPRTPSPDAPLAQSPPIPRSPPSSTENA) are disordered. Over residues 424 to 447 (TPPPPRTPSPDAPLAQSPPIPRSP) the composition is skewed to pro residues.

It belongs to the PPP phosphatase family. PP-1 subfamily. Requires Mn(2+) as cofactor.

It catalyses the reaction O-phospho-L-seryl-[protein] + H2O = L-seryl-[protein] + phosphate. It carries out the reaction O-phospho-L-threonyl-[protein] + H2O = L-threonyl-[protein] + phosphate. This is Putative serine/threonine-protein phosphatase C27B7.6 from Caenorhabditis elegans.